The chain runs to 356 residues: Protein RecA (356 aa).

71–78 (GPESSGKT) is an ATP binding site.

The protein belongs to the RecA family.

Its subcellular location is the cytoplasm. Can catalyze the hydrolysis of ATP in the presence of single-stranded DNA, the ATP-dependent uptake of single-stranded DNA by duplex DNA, and the ATP-dependent hybridization of homologous single-stranded DNAs. It interacts with LexA causing its activation and leading to its autocatalytic cleavage. The chain is Protein RecA from Synechococcus elongatus (strain ATCC 33912 / PCC 7942 / FACHB-805) (Anacystis nidulans R2).